Reading from the N-terminus, the 131-residue chain is SPbeta prophage-derived uncharacterized protein YoqY (131 aa).

In Bacillus subtilis (strain 168), this protein is SPbeta prophage-derived uncharacterized protein YoqY (yoqY).